We begin with the raw amino-acid sequence, 164 residues long: PTS system sorbose-specific EIIB component (164 aa).

The PTS EIIB type-4 domain occupies 1-164 (MIITLARVDD…AKIDEVFGKE (164 aa)). The active-site Pros-phosphohistidine intermediate is H14. H14 carries the phosphohistidine; by EIIA modification.

The protein localises to the cytoplasm. It catalyses the reaction keto-L-sorbose(out) + N(pros)-phospho-L-histidyl-[protein] = L-sorbose 1-phosphate(in) + L-histidyl-[protein]. The phosphoenolpyruvate-dependent sugar phosphotransferase system (PTS), a major carbohydrate active transport system, catalyzes the phosphorylation of incoming sugar substrates concomitant with their translocation across the cell membrane. The enzyme II SorABCD PTS system is involved in L-sorbose transport. The protein is PTS system sorbose-specific EIIB component of Lacticaseibacillus casei (Lactobacillus casei).